Reading from the N-terminus, the 190-residue chain is Peptidyl-tRNA hydrolase (190 aa).

Residue Y14 coordinates tRNA. Catalysis depends on H19, which acts as the Proton acceptor. Residues Y64, N66, and N112 each contribute to the tRNA site.

The protein belongs to the PTH family. In terms of assembly, monomer.

The protein localises to the cytoplasm. It carries out the reaction an N-acyl-L-alpha-aminoacyl-tRNA + H2O = an N-acyl-L-amino acid + a tRNA + H(+). Hydrolyzes ribosome-free peptidyl-tRNAs (with 1 or more amino acids incorporated), which drop off the ribosome during protein synthesis, or as a result of ribosome stalling. Its function is as follows. Catalyzes the release of premature peptidyl moieties from peptidyl-tRNA molecules trapped in stalled 50S ribosomal subunits, and thus maintains levels of free tRNAs and 50S ribosomes. This Chlorobium luteolum (strain DSM 273 / BCRC 81028 / 2530) (Pelodictyon luteolum) protein is Peptidyl-tRNA hydrolase.